A 62-amino-acid chain; its full sequence is Large ribosomal subunit protein bL32 (62 aa).

Residues 1-16 (MAVQKNRKTRSKRGMR) are compositionally biased toward basic residues. Residues 1 to 62 (MAVQKNRKTR…VISQGDSDDE (62 aa)) are disordered. Polar residues predominate over residues 53–62 (VISQGDSDDE).

Belongs to the bacterial ribosomal protein bL32 family.

The chain is Large ribosomal subunit protein bL32 from Alcanivorax borkumensis (strain ATCC 700651 / DSM 11573 / NCIMB 13689 / SK2).